The primary structure comprises 362 residues: MLRSKLSSLREYLTPINHNSNFLTTGEISPEEFVKAGDYLVYKFPTWQWASCPKDLQKLFLPTDKQVLVTRHVPSHQRANEYFEGEFEVEIDEKDRDLALGNESNLKNGENGENDDEAEYGWIRSGRSSSEKGTGEVLDPQRVEEVNDIDELIDETAEGEEEEEEGEEGEGEGNGNGADFHADDDADYDDLDIVQGSHSKLRRYDLYITYSTSYRVPKLYLVGFDANGIPLLPQQMFEDINSDYKDKTATIEQLPVAHNTTSVSIHPCKHSSVMRVLMKHQRARREHENVAENMKRLSIGSEDHKEAMNHIRRLSAGSKELAQKQEEPNDSEIKVDLYLVIFLKFIASVTPGIEYDYTMDAL.

The interval 82-198 (YFEGEFEVEI…DDLDIVQGSH (117 aa)) is flexible region. Residues 101-186 (GNESNLKNGE…GADFHADDDA (86 aa)) are disordered. Residues 129 to 145 (SSEKGTGEVLDPQRVEE) are compositionally biased toward basic and acidic residues. Residues 146 to 171 (VNDIDELIDETAEGEEEEEEGEEGEG) are compositionally biased toward acidic residues. Cysteine 268 acts as the Glycyl thioester intermediate in catalysis. A handle region region spans residues 272–337 (SVMRVLMKHQ…PNDSEIKVDL (66 aa)).

Belongs to the ATG3 family. In terms of assembly, monomer. Interacts with ATG8 through an intermediate thioester bond through the C-terminal Gly of ATG8. Also interacts with the 40 amino acid C-terminal region of the E1-like ATG7 enzyme. Also interacts with the ATG12-ATG5 conjugate.

The protein localises to the cytoplasm. Functionally, E2 conjugating enzyme required for the cytoplasm to vacuole transport (Cvt) and autophagy. Required for selective autophagic degradation of the nucleus (nucleophagy) as well as for mitophagy which contributes to regulate mitochondrial quantity and quality by eliminating the mitochondria to a basal level to fulfill cellular energy requirements and preventing excess ROS production. Responsible for the E2-like covalent binding of phosphatidylethanolamine to the C-terminal Gly of ATG8. The ATG12-ATG5 conjugate plays a role of an E3 and promotes the transfer of ATG8 from ATG3 to phosphatidylethanolamine (PE). This step is required for the membrane association of ATG8. The formation of the ATG8-phosphatidylethanolamine conjugate is essential for autophagy and for the cytoplasm to vacuole transport (Cvt). The ATG8-PE conjugate mediates tethering between adjacent membranes and stimulates membrane hemifusion, leading to expansion of the autophagosomal membrane during autophagy. This is Autophagy-related protein 3 (ATG3) from Lodderomyces elongisporus (strain ATCC 11503 / CBS 2605 / JCM 1781 / NBRC 1676 / NRRL YB-4239) (Yeast).